The following is a 158-amino-acid chain: C-type lectin BML-1 (158 aa).

A signal peptide spans 1-23; sequence MGHFTFTGLCLLAMFLSLRGAEC. Cystine bridges form between cysteine 26–cysteine 37, cysteine 54–cysteine 154, cysteine 61–cysteine 156, and cysteine 129–cysteine 146. The C-type lectin domain maps to 33–155; it reads KNGLCYKVFS…CAALRPFLCQ (123 aa). Ca(2+) contacts are provided by glutamine 119, aspartate 121, and glutamate 127. A Galactose-binding motif is present at residues 119–121; it reads QPD. The N-linked (GlcNAc...) asparagine glycan is linked to asparagine 134. 2 residues coordinate Ca(2+): asparagine 142 and aspartate 143.

It belongs to the true venom lectin family. As to quaternary structure, homodimer; non-covalently linked. Expressed by the venom gland.

The protein resides in the secreted. Recombinant C-type lectin BML-1 is able to agglutinate erythrocytes. May be a calcium-dependent lectin. This chain is C-type lectin BML-1, found in Bungarus multicinctus (Many-banded krait).